We begin with the raw amino-acid sequence, 1606 residues long: Fatty acid synthase apf5 (1606 aa).

Residues 142-218 (VPVSAILISL…ETLSTSHDGQ (77 aa)) form the Carrier domain. The residue at position 177 (S177) is an O-(pantetheine 4'-phosphoryl)serine. Residues 996–1539 (KESLIEVALQ…QKGGQALLVH (544 aa)) enclose the Ketosynthase family 3 (KS3) domain. Catalysis depends on for beta-ketoacyl synthase activity residues C1182, H1424, and H1465.

The protein belongs to the thiolase-like superfamily. Fungal fatty acid synthetase subunit alpha family.

It carries out the reaction a fatty acyl-[ACP] + malonyl-[ACP] + H(+) = a 3-oxoacyl-[ACP] + holo-[ACP] + CO2. It participates in secondary metabolite biosynthesis. In terms of biological role, fatty acid synthase; part of the gene cluster that mediates the biosynthesis of the cyclic tetrapeptide apicidin F (APF). The non-ribosomal peptide synthetase apf1 incorporates four different amino acids to produce apicidin F: L-phenylalanine, D-pipecolic acid (D-pip), N-methoxy-L-tryptophan and L-2-aminooctanedioic acid. L-Phenylalanine is the only proteinogenic amino acid directly used by apf1. The 3 other apf1 substrates are non-proteinogenic and have to be modified by other enzymes of the cluster. Lysine is converted to delta-1-pyrroline-5-carboxylate (P5C) which is reduced to L-pipecolic acid (L-pip) by apf3. L-pip is epimerized to D-pip, probably by apf1 activity, prior to incorporation. L-Tryptophan is N-oxidyzed by one of the cytochrome P450 monooxygenases (apf7 or apf8), and further methylated at the hydroxy group by the O-methyltransferase apf6 to yield N-methoxy-L-tryptophan. The synthesis of the fourth apf1 substrate is more complex. The fatty acid synthase apf5 is involved in the synthesis of the octanoic acid backbone of L-2-aminooctanedioic acid by fixing one acetyl-CoA unit and three malonyl-CoA units. Then one of the cytochrome P450 monooxygenases (apf7 or apf8) may oxidize this backbone to 2-oxooctanoic acid. The aminotransferase apf4 is predicted to catalyze the exchange of the keto group with an amino group. The next step would be the oxidation of 2-aminooctanoic acid by one of the cytochrome P450 monooxygenases (apf7 or apf8). The last step is the oxidation of 2-amino-8-hydroxyoctanoic acid to 2-aminooctanedioic acid is catalyzed by the FAD-dependent monooxygenase apf9. This is Fatty acid synthase apf5 from Gibberella fujikuroi (strain CBS 195.34 / IMI 58289 / NRRL A-6831) (Bakanae and foot rot disease fungus).